The primary structure comprises 539 residues: Hydroxylamine reductase (539 aa).

[4Fe-4S] cluster contacts are provided by Cys-3, Cys-6, Cys-13, and Cys-19. Hybrid [4Fe-2O-2S] cluster-binding residues include His-240, Glu-264, Cys-308, Cys-395, Cys-423, Cys-448, Glu-482, and Lys-484. The residue at position 395 (Cys-395) is a Cysteine persulfide.

The protein belongs to the HCP family. The cofactor is [4Fe-4S] cluster. Hybrid [4Fe-2O-2S] cluster is required as a cofactor.

It is found in the cytoplasm. The enzyme catalyses A + NH4(+) + H2O = hydroxylamine + AH2 + H(+). In terms of biological role, catalyzes the reduction of hydroxylamine to form NH(3) and H(2)O. The polypeptide is Hydroxylamine reductase (Thermodesulfovibrio yellowstonii (strain ATCC 51303 / DSM 11347 / YP87)).